A 355-amino-acid chain; its full sequence is UDP-3-O-acylglucosamine N-acyltransferase (355 aa).

His-252 acts as the Proton acceptor in catalysis.

It belongs to the transferase hexapeptide repeat family. LpxD subfamily. As to quaternary structure, homotrimer.

The catalysed reaction is a UDP-3-O-[(3R)-3-hydroxyacyl]-alpha-D-glucosamine + a (3R)-hydroxyacyl-[ACP] = a UDP-2-N,3-O-bis[(3R)-3-hydroxyacyl]-alpha-D-glucosamine + holo-[ACP] + H(+). Its pathway is bacterial outer membrane biogenesis; LPS lipid A biosynthesis. In terms of biological role, catalyzes the N-acylation of UDP-3-O-acylglucosamine using 3-hydroxyacyl-ACP as the acyl donor. Is involved in the biosynthesis of lipid A, a phosphorylated glycolipid that anchors the lipopolysaccharide to the outer membrane of the cell. The chain is UDP-3-O-acylglucosamine N-acyltransferase from Polynucleobacter asymbioticus (strain DSM 18221 / CIP 109841 / QLW-P1DMWA-1) (Polynucleobacter necessarius subsp. asymbioticus).